Reading from the N-terminus, the 268-residue chain is HLA class II histocompatibility antigen, DQ beta 2 chain (268 aa).

A signal peptide spans 1–32; sequence MSWKMALQIPGGFWAAAVTVMLVMLSTPVAEA. The beta-1 stretch occupies residues 33–126; that stretch reads RDFPKDFLVQ…ELRTTLQRQV (94 aa). The Extracellular segment spans residues 33-229; the sequence is RDFPKDFLVQ…RAQSESAQSK (197 aa). Cystine bridges form between cysteine 47/cysteine 110 and cysteine 148/cysteine 204. N-linked (GlcNAc...) asparagine glycosylation occurs at asparagine 51. The beta-2 stretch occupies residues 127–229; the sequence is EPTVTISPSR…RAQSESAQSK (103 aa). The 89-residue stretch at 128-216 folds into the Ig-like C1-type domain; that stretch reads PTVTISPSRT…EHPSLQSPIT (89 aa). The helical transmembrane segment at 230-250 threads the bilayer; the sequence is MLSGIGGFVLGLIFLGLGLII. At 251–268 the chain is on the cytoplasmic side; sequence RHRGQKGPRGPPPAGLLH.

The protein belongs to the MHC class II family. In terms of assembly, heterodimer of an alpha and a beta subunit; also referred as MHC class II molecule. Dimer formation with HLA-DQA2, but not with HLA-DQA1, is required for efficient exit from the endoplasmic reticulum (ER). In the ER, forms a heterononamer; 3 MHC class II molecules bind to a CD74 homotrimer (also known as invariant chain or HLA class II histocompatibility antigen gamma chain). In the endosomal/lysosomal system; CD74 undergoes sequential degradation by various proteases; leaving a small fragment termed CLIP on each MHC class II molecule. MHC class II molecule interacts with HLA_DM, and HLA_DO in B-cells, in order to release CLIP and facilitate the binding of antigenic peptides. Association with HLA-DMA also occurs in skin Langerhans cells, in post-Golgi compartments. In terms of tissue distribution, restricted to skin Langerhans cells (at protein level).

The protein localises to the cell membrane. It localises to the endoplasmic reticulum membrane. The protein resides in the golgi apparatus. It is found in the trans-Golgi network membrane. Its subcellular location is the endosome membrane. The protein localises to the lysosome membrane. Binds peptides derived from antigens that access the endocytic route of antigen presenting cells (APC) and presents them on the cell surface for recognition by the CD4 T-cells. The peptide binding cleft accommodates peptides of 10-30 residues. The peptides presented by MHC class II molecules are generated mostly by degradation of proteins that access the endocytic route, where they are processed by lysosomal proteases and other hydrolases. Exogenous antigens that have been endocytosed by the APC are thus readily available for presentation via MHC II molecules, and for this reason this antigen presentation pathway is usually referred to as exogenous. As membrane proteins on their way to degradation in lysosomes as part of their normal turn-over are also contained in the endosomal/lysosomal compartments, exogenous antigens must compete with those derived from endogenous components. Autophagy is also a source of endogenous peptides, autophagosomes constitutively fuse with MHC class II loading compartments. In addition to APCs, other cells of the gastrointestinal tract, such as epithelial cells, express MHC class II molecules and CD74 and act as APCs, which is an unusual trait of the GI tract. To produce a MHC class II molecule that presents an antigen, three MHC class II molecules (heterodimers of an alpha and a beta chain) associate with a CD74 trimer in the ER to form a heterononamer. Soon after the entry of this complex into the endosomal/lysosomal system where antigen processing occurs, CD74 undergoes a sequential degradation by various proteases, including CTSS and CTSL, leaving a small fragment termed CLIP (class-II-associated invariant chain peptide). The removal of CLIP is facilitated by HLA-DM via direct binding to the alpha-beta-CLIP complex so that CLIP is released. HLA-DM stabilizes MHC class II molecules until primary high affinity antigenic peptides are bound. The MHC II molecule bound to a peptide is then transported to the cell membrane surface. In B-cells, the interaction between HLA-DM and MHC class II molecules is regulated by HLA-DO. Primary dendritic cells (DCs) also to express HLA-DO. Lysosomal microenvironment has been implicated in the regulation of antigen loading into MHC II molecules, increased acidification produces increased proteolysis and efficient peptide loading. The sequence is that of HLA class II histocompatibility antigen, DQ beta 2 chain (HLA-DQB2) from Homo sapiens (Human).